The following is a 231-amino-acid chain: Potassium/proton antiporter CemA (231 aa).

The next 4 helical transmembrane spans lie at 7 to 27, 104 to 124, 154 to 174, and 189 to 209; these read FIPL…SFTF, IHTI…SVYS, ILFL…ELMI, and IISF…KYWI.

Belongs to the CemA family.

The protein resides in the plastid. Its subcellular location is the chloroplast inner membrane. It carries out the reaction K(+)(in) + H(+)(out) = K(+)(out) + H(+)(in). In terms of biological role, contributes to K(+)/H(+) antiport activity by supporting proton efflux to control proton extrusion and homeostasis in chloroplasts in a light-dependent manner to modulate photosynthesis. Prevents excessive induction of non-photochemical quenching (NPQ) under continuous-light conditions. Indirectly promotes efficient inorganic carbon uptake into chloroplasts. The protein is Potassium/proton antiporter CemA of Pisum sativum (Garden pea).